A 549-amino-acid chain; its full sequence is TBC1 domain family member 3G (549 aa).

The Rab-GAP TBC domain maps to 101–293; the sequence is GMPMNIRGPM…RLWDVYLVEG (193 aa). 2 S-palmitoyl cysteine lipidation sites follow: Cys-318 and Cys-325. 2 disordered regions span residues 350-443 and 507-526; these read LTRK…QGGP and AAPS…DEQQ. The segment covering 398 to 417 has biased composition (low complexity); the sequence is PRPIWSASPPRAPRSSTPCP.

Post-translationally, ubiquitinated by a CUL7-based E3 ligase, which leads to proteasomal degradation. In terms of processing, palmitoylation is required for membrane localization and protects TBC1D3 from ubiquitination.

It localises to the cell membrane. In terms of biological role, acts as a GTPase activating protein for RAB5. Does not act on RAB4 or RAB11. In Homo sapiens (Human), this protein is TBC1 domain family member 3G (TBC1D3G).